A 71-amino-acid polypeptide reads, in one-letter code: MKAVIFFCLLSVMVFTVIEAVKEEGTKPAEAARECAAKNKRCADWAGPWCCEGLYCSCRSYPGCMCRPNSG.

The first 20 residues, 1-20 (MKAVIFFCLLSVMVFTVIEA), serve as a signal peptide directing secretion. Positions 21–33 (VKEEGTKPAEAAR) are excised as a propeptide. Disulfide bonds link Cys-35/Cys-51, Cys-42/Cys-56, Cys-50/Cys-66, and Cys-58/Cys-64. Ser-70 carries the post-translational modification Serine amide.

The protein belongs to the neurotoxin 07 (Beta/delta-agtx) family. 01 (aga-2) subfamily. As to expression, expressed by the venom gland.

The protein resides in the secreted. Its function is as follows. Insecticidal neurotoxin that modulates the insect Nav channel (DmNaV1/tipE (para/tipE)) in a unique manner, with both the activation and inactivation processes being affected. The voltage dependence of activation is shifted toward more hyperpolarized potentials (analogous to site 4 toxins) and a non-inactivating persistent sodium current is induced (site 3-like action). Interestingly, both effects take place in a voltage-dependent manner, producing a bell-shaped curve between -80 and 0 mV. Compared to beta/delta-agatoxin-1 to -3, this toxin appears to affect the insect sodium channel only weakly. This chain is U3-agatoxin-Ao1a, found in Agelena orientalis (Funnel-web spider).